Reading from the N-terminus, the 213-residue chain is Orotate phosphoribosyltransferase (213 aa).

Residue Lys26 coordinates 5-phospho-alpha-D-ribose 1-diphosphate. An orotate-binding site is contributed by 34 to 35; the sequence is FF. Residues 72–73, Arg99, Lys100, Lys103, His105, and 124–132 each bind 5-phospho-alpha-D-ribose 1-diphosphate; these read YK and DDVITAGTS. Orotate is bound by residues Thr128 and Arg156.

It belongs to the purine/pyrimidine phosphoribosyltransferase family. PyrE subfamily. In terms of assembly, homodimer. Requires Mg(2+) as cofactor.

The enzyme catalyses orotidine 5'-phosphate + diphosphate = orotate + 5-phospho-alpha-D-ribose 1-diphosphate. The protein operates within pyrimidine metabolism; UMP biosynthesis via de novo pathway; UMP from orotate: step 1/2. Catalyzes the transfer of a ribosyl phosphate group from 5-phosphoribose 1-diphosphate to orotate, leading to the formation of orotidine monophosphate (OMP). This chain is Orotate phosphoribosyltransferase, found in Methylococcus capsulatus (strain ATCC 33009 / NCIMB 11132 / Bath).